We begin with the raw amino-acid sequence, 262 residues long: Dihydroorotate dehydrogenase B (NAD(+)), electron transfer subunit (262 aa).

An FAD-binding FR-type domain is found at glutamine 3 to valine 104. FAD contacts are provided by residues arginine 53–serine 56, leucine 70–arginine 72, and glycine 79–threonine 80. [2Fe-2S] cluster-binding residues include cysteine 226, cysteine 231, cysteine 234, and cysteine 249.

It belongs to the PyrK family. In terms of assembly, heterotetramer of 2 PyrK and 2 PyrD type B subunits. It depends on [2Fe-2S] cluster as a cofactor. FAD is required as a cofactor.

The protein operates within pyrimidine metabolism; UMP biosynthesis via de novo pathway; orotate from (S)-dihydroorotate (NAD(+) route): step 1/1. In terms of biological role, responsible for channeling the electrons from the oxidation of dihydroorotate from the FMN redox center in the PyrD type B subunit to the ultimate electron acceptor NAD(+). This Lactococcus lactis subsp. cremoris (strain SK11) protein is Dihydroorotate dehydrogenase B (NAD(+)), electron transfer subunit.